The following is a 273-amino-acid chain: MAVVTMKQLLDSGAHFGHQTRRWNPKMKRFIFTDRNGIYIIDLQQTLTYIDKAYEFVKETVAHGGSIMFVGTKKQAQESIAEEATRVGMPYVNQRWLGGMLTNFSTVHKRLQRLKELEAMEQTGGFEGRTKKEILMLTREKNKLERSLGGIRDMQKVPSAIWVVDTNKEHLAVAEARKLNIPIIAILDTNCDPDLVDYPIPGNDDAIRSAALLTKVVASAVAEGLQARAGAGADKAAAEAAEPLAEWEQELLAGATTAAPEAAAGEAAAPEQS.

This sequence belongs to the universal ribosomal protein uS2 family.

The polypeptide is Small ribosomal subunit protein uS2 (Mycolicibacterium vanbaalenii (strain DSM 7251 / JCM 13017 / BCRC 16820 / KCTC 9966 / NRRL B-24157 / PYR-1) (Mycobacterium vanbaalenii)).